A 37-amino-acid chain; its full sequence is Large ribosomal subunit protein bL36c (37 aa).

It belongs to the bacterial ribosomal protein bL36 family.

The protein resides in the plastid. It localises to the cyanelle. This is Large ribosomal subunit protein bL36c (rpl36) from Cyanophora paradoxa.